The sequence spans 334 residues: Putative B3 domain-containing protein At5g66980 (334 aa).

2 DNA-binding regions (TF-B3) span residues 8–105 (LQFF…FAND) and 218–317 (HPHF…VSGR).

It is found in the nucleus. The protein is Putative B3 domain-containing protein At5g66980 of Arabidopsis thaliana (Mouse-ear cress).